The primary structure comprises 84 residues: MHGTCLSGLYPEPFTHNSHDYPHFNIYISFGGPKYCITALNTYVIPLLHHILTTQFIHTYFNIPTKSPPKSPKHKNYLSFNFTK.

It belongs to the UPF0320 family.

This chain is UPF0320 protein YNR077C, found in Saccharomyces cerevisiae (strain ATCC 204508 / S288c) (Baker's yeast).